Consider the following 93-residue polypeptide: MARVTVEDAVNKIGNRFDMILVAARRARQIAVQGKDPMVEEENDKPTVIALREIELGLVTADTLDADERQTVREREAAEIAAVAAIAEGRNAI.

This sequence belongs to the RNA polymerase subunit omega family. As to quaternary structure, the RNAP catalytic core consists of 2 alpha, 1 beta, 1 beta' and 1 omega subunit. When a sigma factor is associated with the core the holoenzyme is formed, which can initiate transcription.

It catalyses the reaction RNA(n) + a ribonucleoside 5'-triphosphate = RNA(n+1) + diphosphate. Its function is as follows. Promotes RNA polymerase assembly. Latches the N- and C-terminal regions of the beta' subunit thereby facilitating its interaction with the beta and alpha subunits. In Shewanella piezotolerans (strain WP3 / JCM 13877), this protein is DNA-directed RNA polymerase subunit omega.